The chain runs to 171 residues: Transcription antitermination protein NusB (171 aa).

Belongs to the NusB family.

Involved in transcription antitermination. Required for transcription of ribosomal RNA (rRNA) genes. Binds specifically to the boxA antiterminator sequence of the ribosomal RNA (rrn) operons. In Brucella ovis (strain ATCC 25840 / 63/290 / NCTC 10512), this protein is Transcription antitermination protein NusB.